The sequence spans 90 residues: Small ribosomal subunit protein uS15c (90 aa).

The protein belongs to the universal ribosomal protein uS15 family. Part of the 30S ribosomal subunit.

It is found in the plastid. Its subcellular location is the chloroplast. The chain is Small ribosomal subunit protein uS15c (rps15) from Morus indica (Mulberry).